The following is a 68-amino-acid chain: DNA-directed RNA polymerase subunit omega (68 aa).

This sequence belongs to the RNA polymerase subunit omega family. In terms of assembly, the RNAP catalytic core consists of 2 alpha, 1 beta, 1 beta' and 1 omega subunit. When a sigma factor is associated with the core the holoenzyme is formed, which can initiate transcription.

The catalysed reaction is RNA(n) + a ribonucleoside 5'-triphosphate = RNA(n+1) + diphosphate. In terms of biological role, promotes RNA polymerase assembly. Latches the N- and C-terminal regions of the beta' subunit thereby facilitating its interaction with the beta and alpha subunits. The sequence is that of DNA-directed RNA polymerase subunit omega from Trichlorobacter lovleyi (strain ATCC BAA-1151 / DSM 17278 / SZ) (Geobacter lovleyi).